Here is a 473-residue protein sequence, read N- to C-terminus: UTP--glucose-1-phosphate uridylyltransferase (473 aa).

UTP contacts are provided by residues 89-92 (LNGG), Lys-103, Gln-166, and Gly-195. Substrate is bound at residue 91–92 (GG). Substrate is bound by residues His-196 and 224-226 (NSD). Residues Asp-226 and Lys-364 each coordinate UTP.

This sequence belongs to the UDPGP type 1 family.

The protein resides in the cytoplasm. The enzyme catalyses alpha-D-glucose 1-phosphate + UTP + H(+) = UDP-alpha-D-glucose + diphosphate. In terms of biological role, plays a central role as a glucosyl donor in cellular metabolic pathways. The polypeptide is UTP--glucose-1-phosphate uridylyltransferase (Hordeum vulgare (Barley)).